The chain runs to 360 residues: Magnesium-protoporphyrin IX monomethyl ester [oxidative] cyclase (360 aa).

Residues Met1–Asp21 form a disordered region.

Belongs to the AcsF family. Fe cation is required as a cofactor.

The enzyme catalyses Mg-protoporphyrin IX 13-monomethyl ester + 3 NADPH + 3 O2 + 2 H(+) = 3,8-divinyl protochlorophyllide a + 3 NADP(+) + 5 H2O. Its pathway is porphyrin-containing compound metabolism; chlorophyll biosynthesis (light-independent). In terms of biological role, catalyzes the formation of the isocyclic ring in chlorophyll biosynthesis. Mediates the cyclase reaction, which results in the formation of divinylprotochlorophyllide (Pchlide) characteristic of all chlorophylls from magnesium-protoporphyrin IX 13-monomethyl ester (MgPMME). The protein is Magnesium-protoporphyrin IX monomethyl ester [oxidative] cyclase of Synechococcus sp. (strain CC9311).